A 614-amino-acid chain; its full sequence is Pyruvate decarboxylase 2 (614 aa).

Substrate-binding residues include D50 and H137. A thiamine pyrophosphate binding region spans residues 415–523 (DSWFNCQKLK…FLINNGGYTI (109 aa)). Residues D491, N518, and G520 each coordinate Mg(2+). Residue E524 participates in substrate binding.

Belongs to the TPP enzyme family. As to quaternary structure, homotetramer. A metal cation serves as cofactor. Thiamine diphosphate is required as a cofactor. In terms of tissue distribution, pollen.

The enzyme catalyses a 2-oxocarboxylate + H(+) = an aldehyde + CO2. This is Pyruvate decarboxylase 2 (PDC2) from Nicotiana tabacum (Common tobacco).